We begin with the raw amino-acid sequence, 487 residues long: CUGBP Elav-like family member 1 (487 aa).

Methionine 1 carries the post-translational modification N-acetylmethionine. Position 4 is a phosphothreonine (threonine 4). RRM domains lie at 16 to 99 (IKMF…PADS) and 108 to 188 (RKLF…FADT). Residue lysine 109 forms a Glycyl lysine isopeptide (Lys-Gly) (interchain with G-Cter in SUMO2) linkage. Residues serine 179 and serine 303 each carry the phosphoserine modification. The interval 277–310 (TPSGTNALTTSSSPLSVLTSSAGSSPSSSSSNSV) is disordered. Low complexity predominate over residues 283-310 (ALTTSSSPLSVLTSSAGSSPSSSSSNSV). The RRM 3 domain maps to 402 to 480 (ANLFIYHLPQ…KRLKVQLKRS (79 aa)).

This sequence belongs to the CELF/BRUNOL family. As to quaternary structure, interacts with HNRNPH1; the interaction in RNA-dependent. Interacts with PARN. Component of an EIF2 complex at least composed of CELF1/CUGBP1, CALR, CALR3, EIF2S1, EIF2S2, HSP90B1 and HSPA5. Associates with polysomes.

It localises to the nucleus. It is found in the cytoplasm. Its function is as follows. RNA-binding protein implicated in the regulation of several post-transcriptional events. Involved in pre-mRNA alternative splicing, mRNA translation and stability. Mediates exon inclusion and/or exclusion in pre-mRNA that are subject to tissue-specific and developmentally regulated alternative splicing. Specifically activates exon 5 inclusion of cardiac isoforms of TNNT2 during heart remodeling at the juvenile to adult transition. Acts both as an activator and as a repressor of a pair of coregulated exons: promotes inclusion of the smooth muscle (SM) exon but exclusion of the non-muscle (NM) exon in actinin pre-mRNAs. Activates SM exon 5 inclusion by antagonizing the repressive effect of PTB. Promotes exclusion of exon 11 of the INSR pre-mRNA. Inhibits, together with HNRNPH1, insulin receptor (IR) pre-mRNA exon 11 inclusion in myoblast. Increases translation and controls the choice of translation initiation codon of CEBPB mRNA. Increases mRNA translation of CEBPB in aging liver. Increases translation of CDKN1A mRNA by antagonizing the repressive effect of CALR3. Mediates rapid cytoplasmic mRNA deadenylation. Recruits the deadenylase PARN to the poly(A) tail of EDEN-containing mRNAs to promote their deadenylation. Required for completion of spermatogenesis. Binds to (CUG)n triplet repeats in the 3'-UTR of transcripts such as DMPK and to Bruno response elements (BREs). Binds to muscle-specific splicing enhancer (MSE) intronic sites flanking the alternative exon 5 of TNNT2 pre-mRNA. Binds to AU-rich sequences (AREs or EDEN-like) localized in the 3'-UTR of JUN and FOS mRNAs. Binds to the IR RNA. Binds to the 5'-region of CDKN1A and CEBPB mRNAs. Binds with the 5'-region of CEBPB mRNA in aging liver. May be a specific regulator of miRNA biogenesis. Binds to primary microRNA pri-MIR140 and, with CELF2, negatively regulates the processing to mature miRNA. This chain is CUGBP Elav-like family member 1 (Celf1), found in Rattus norvegicus (Rat).